The sequence spans 436 residues: UDP-N-acetylmuramate--L-alanine ligase (436 aa).

An ATP-binding site is contributed by 110 to 116; it reads GAHGKTS.

Belongs to the MurCDEF family.

The protein localises to the cytoplasm. The enzyme catalyses UDP-N-acetyl-alpha-D-muramate + L-alanine + ATP = UDP-N-acetyl-alpha-D-muramoyl-L-alanine + ADP + phosphate + H(+). It participates in cell wall biogenesis; peptidoglycan biosynthesis. Cell wall formation. This chain is UDP-N-acetylmuramate--L-alanine ligase, found in Lacticaseibacillus casei (strain BL23) (Lactobacillus casei).